Reading from the N-terminus, the 139-residue chain is Histone H2B (139 aa).

The segment covering 1 to 10 (MAPKVAEKKP) has biased composition (basic and acidic residues). The disordered stretch occupies residues 1–47 (MAPKVAEKKPSLAGKAPAGKAPAEKKEAGKKTTTATGEKKKRTKARK). N6-acetyllysine; alternate is present on residues Lys-8 and Lys-9. Residues Lys-8 and Lys-9 each participate in a glycyl lysine isopeptide (Lys-Gly) (interchain with G-Cter in SUMO); alternate cross-link. At Lys-15 the chain carries N6-acetyllysine. Lys-25 carries the N6-acetyllysine; alternate modification. A Glycyl lysine isopeptide (Lys-Gly) (interchain with G-Cter in SUMO); alternate cross-link involves residue Lys-25. Lys-26 participates in a covalent cross-link: Glycyl lysine isopeptide (Lys-Gly) (interchain with G-Cter in SUMO). Lys-133 is covalently cross-linked (Glycyl lysine isopeptide (Lys-Gly) (interchain with G-Cter in ubiquitin)).

This sequence belongs to the histone H2B family. In terms of assembly, the nucleosome is a histone octamer containing two molecules each of H2A, H2B, H3 and H4 assembled in one H3-H4 heterotetramer and two H2A-H2B heterodimers. The octamer wraps approximately 147 bp of DNA. Post-translationally, monoubiquitinated by the UBC2-BRE1 complex to form H2BK123ub1. H2BK123ub1 gives a specific tag for epigenetic transcriptional activation and is also prerequisite for H3K4me and H3K79me formation. H2BK123ub1 also modulates the formation of double-strand breaks during meiosis and is a prerequisite for DNA-damage checkpoint activation. Acetylated by GCN5 to form H2BK11ac and H2BK16ac. H2BK16ac can also be formed by ESA1. Acetylation of N-terminal lysines and particularly formation of H2BK11acK16ac has a positive effect on transcription. In terms of processing, sumoylation to form H2BK6su or H2BK7su, and probably also H2BK16su or H2BK17su, occurs preferentially near the telomeres and represses gene transcription.

Its subcellular location is the nucleus. The protein resides in the chromosome. Its function is as follows. Core component of nucleosome. Nucleosomes wrap and compact DNA into chromatin, limiting DNA accessibility to the cellular machineries which require DNA as a template. Histones thereby play a central role in transcription regulation, DNA repair, DNA replication and chromosomal stability. DNA accessibility is regulated via a complex set of post-translational modifications of histones, also called histone code, and nucleosome remodeling. This chain is Histone H2B (HTB1), found in Yarrowia lipolytica (strain CLIB 122 / E 150) (Yeast).